A 214-amino-acid chain; its full sequence is Protein-L-isoaspartate O-methyltransferase (214 aa).

Ser61 is an active-site residue.

It belongs to the methyltransferase superfamily. L-isoaspartyl/D-aspartyl protein methyltransferase family.

The protein resides in the cytoplasm. The catalysed reaction is [protein]-L-isoaspartate + S-adenosyl-L-methionine = [protein]-L-isoaspartate alpha-methyl ester + S-adenosyl-L-homocysteine. In terms of biological role, catalyzes the methyl esterification of L-isoaspartyl residues in peptides and proteins that result from spontaneous decomposition of normal L-aspartyl and L-asparaginyl residues. It plays a role in the repair and/or degradation of damaged proteins. This chain is Protein-L-isoaspartate O-methyltransferase, found in Paramagnetospirillum magneticum (strain ATCC 700264 / AMB-1) (Magnetospirillum magneticum).